A 350-amino-acid chain; its full sequence is m7GpppX diphosphatase (350 aa).

Ser-2 bears the N-acetylserine mark. Phosphoserine is present on Ser-60. Thr-66 is modified (phosphothreonine). Thr-66 is modified (phosphothreonine; by YAK1). Tyr-70 carries the post-translational modification Phosphotyrosine. Position 120 is a phosphothreonine (Thr-120). Substrate contacts are provided by residues Glu-171, Lys-196, and 259–270 (HYQPSYYHFHIH). The Histidine triad motif motif lies at 266-270 (HFHIH). His-268 functions as the Nucleophile in the catalytic mechanism.

This sequence belongs to the HIT family. As to quaternary structure, homodimer. Forms heterodimer with DCS2; the interaction inhibits the DCS1 scavenger decapping activity during post-diauxic growth. Post-translationally, phosphorylated. Phosphorylation occurs upon glucose deprivation.

The protein resides in the cytoplasm. It localises to the perinuclear region. It is found in the P-body. It catalyses the reaction a 5'-end (N(7)-methyl 5'-triphosphoguanosine)-ribonucleoside in mRNA + H2O = N(7)-methyl-GMP + a 5'-end diphospho-ribonucleoside in mRNA + 2 H(+). The hydrolytic product 7-methylguanosine diphosphate (m7GDP) efficiently inhibits the decapping scavenger activity and acts as a competitive inhibitor in vitro. Decapping scavenger enzyme that catalyzes the cleavage of a residual cap structure following the degradation of mRNAs by the 3'-&gt;5' exosome-mediated mRNA decay pathway. Hydrolyzes cap analog structures like 7-methylguanosine nucleoside triphosphate (m7GpppG) and tri-methyl guanosine nucleoside triphosphate (m3(2,2,7)GpppG) with up to 10 nucleotide substrates (small capped oligoribonucleotides) and specifically releases 5'-phosphorylated RNA fragments and 7-methylguanosine monophosphate (m7GMP) or tri-methyl guanosine nucleoside monophosphate (m3(2,2,7)GMP), respectively. Does not hydrolyze unmethylated cap analog (GpppG) and shows no decapping activity on intact m7GpppG-capped mRNA molecules longer than 25 nucleotides. Does not hydrolyze 7-methylguanosine diphosphate (m7GDP) and tri-methylguanosine diphosphate (m3(2,2,7)GDP) to (m(7)GMP) and m3(2,2,7)GMP, respectively. May also play a role in the 5'-&gt;3 mRNA decay pathway; m7GDP, the downstream product released by the 5'-&gt;3' mRNA mediated decapping activity, may be also converted by DCS1 to m7GMP. Binds to m7GpppG and strongly to m7GDP. May also regulate the 5'-&gt;3' exoribonucleolytic mRNA decay pathway in a cap-independent manner. Negatively regulates trehalase activity. This Saccharomyces cerevisiae (strain ATCC 204508 / S288c) (Baker's yeast) protein is m7GpppX diphosphatase.